Consider the following 171-residue polypeptide: 3-hydroxydecanoyl-[acyl-carrier-protein] dehydratase (171 aa).

Histidine 70 is a catalytic residue.

The protein belongs to the thioester dehydratase family. FabA subfamily. In terms of assembly, homodimer.

The protein resides in the cytoplasm. The catalysed reaction is a (3R)-hydroxyacyl-[ACP] = a (2E)-enoyl-[ACP] + H2O. It catalyses the reaction (3R)-hydroxydecanoyl-[ACP] = (2E)-decenoyl-[ACP] + H2O. It carries out the reaction (2E)-decenoyl-[ACP] = (3Z)-decenoyl-[ACP]. The protein operates within lipid metabolism; fatty acid biosynthesis. Functionally, necessary for the introduction of cis unsaturation into fatty acids. Catalyzes the dehydration of (3R)-3-hydroxydecanoyl-ACP to E-(2)-decenoyl-ACP and then its isomerization to Z-(3)-decenoyl-ACP. Can catalyze the dehydratase reaction for beta-hydroxyacyl-ACPs with saturated chain lengths up to 16:0, being most active on intermediate chain length. The sequence is that of 3-hydroxydecanoyl-[acyl-carrier-protein] dehydratase from Colwellia psychrerythraea (strain 34H / ATCC BAA-681) (Vibrio psychroerythus).